The following is a 79-amino-acid chain: Large ribosomal subunit protein bL31 (79 aa).

The protein belongs to the bacterial ribosomal protein bL31 family. Type A subfamily. In terms of assembly, part of the 50S ribosomal subunit.

Functionally, binds the 23S rRNA. This chain is Large ribosomal subunit protein bL31, found in Synechococcus sp. (strain CC9902).